The chain runs to 434 residues: MTASSAKPASSVDSFFSATLAEADPEIAAAIKGELGRQRHEIELIASENIVSRAVLEAQGSVMTNKYAEGYPGARYYGGCEWVDVAENLAIDRAKKLFGANFANVQPNSGSQMNQAVFLALLQPGDTFMGLDLAAGGHLTHGSPVNMSGKWFKAAHYTVRRDDHLIDMDAVAKQAEEVKPKLIIAGGSAYSRPWDFKRFREIADHVGAYLLVDMAHFAGLVAGGAHASPVPHAHIVTTTTHKSLRGPRGGLILWNDEQFTKKLNSAIFPGLQGGPLMHVIAAKAVAFAEALRPEFKTYAKNIVENAKALAESLRAQGFDIVSGGTDNHLMLVDLRPKGLKGNVSEKALVRAGITCNKNGIPFDPEKPFVTSGLRLGTPAATTRGFGVAEFQQVGSLIAEVLNAIAQAPDGSAPLVEAAVKAKVKALTDRFPIYQ.

(6S)-5,6,7,8-tetrahydrofolate-binding positions include Leu133 and 137–139 (GHL). Lys242 is subject to N6-(pyridoxal phosphate)lysine.

This sequence belongs to the SHMT family. As to quaternary structure, homodimer. Pyridoxal 5'-phosphate serves as cofactor.

Its subcellular location is the cytoplasm. It catalyses the reaction (6R)-5,10-methylene-5,6,7,8-tetrahydrofolate + glycine + H2O = (6S)-5,6,7,8-tetrahydrofolate + L-serine. It functions in the pathway one-carbon metabolism; tetrahydrofolate interconversion. Its pathway is amino-acid biosynthesis; glycine biosynthesis; glycine from L-serine: step 1/1. Catalyzes the reversible interconversion of serine and glycine with tetrahydrofolate (THF) serving as the one-carbon carrier. This reaction serves as the major source of one-carbon groups required for the biosynthesis of purines, thymidylate, methionine, and other important biomolecules. Also exhibits THF-independent aldolase activity toward beta-hydroxyamino acids, producing glycine and aldehydes, via a retro-aldol mechanism. In Bradyrhizobium sp. (strain BTAi1 / ATCC BAA-1182), this protein is Serine hydroxymethyltransferase.